Reading from the N-terminus, the 138-residue chain is Gap junction alpha-4 protein (138 aa).

Residues 1 to 16 (DWGFLEKLLDQVQEHS) are Cytoplasmic-facing. The chain crosses the membrane as a helical span at residues 17 to 39 (TVVGKIWLTVLFIFRILILGLAG). The Extracellular portion of the chain corresponds to 40-74 (ESVWGDEQSDFECNTAQPGCTNVCYDQAFPISHIP). The helical transmembrane segment at 75 to 97 (YWVLQFLFVSTPTLVYLGHVIYL) threads the bilayer. The Cytoplasmic segment spans residues 98–138 (SRREERLRQKEGELRALPDKDPRVERALAGIERQMAKISVA).

It belongs to the connexin family. Alpha-type (group II) subfamily. In terms of assembly, a connexon is composed of a hexamer of connexins.

It localises to the cell membrane. It is found in the cell junction. The protein localises to the gap junction. Functionally, one gap junction consists of a cluster of closely packed pairs of transmembrane channels, the connexons, through which materials of low MW diffuse from one cell to a neighboring cell. This Sus scrofa (Pig) protein is Gap junction alpha-4 protein (GJA4).